Consider the following 226-residue polypeptide: 7-cyano-7-deazaguanine synthase (226 aa).

ATP is bound at residue 7-17; sequence LSGGMDSLVTT. Zn(2+) contacts are provided by Cys-187, Cys-195, Cys-198, and Cys-201.

The protein belongs to the QueC family. Zn(2+) serves as cofactor.

It carries out the reaction 7-carboxy-7-deazaguanine + NH4(+) + ATP = 7-cyano-7-deazaguanine + ADP + phosphate + H2O + H(+). Its pathway is purine metabolism; 7-cyano-7-deazaguanine biosynthesis. Its function is as follows. Catalyzes the ATP-dependent conversion of 7-carboxy-7-deazaguanine (CDG) to 7-cyano-7-deazaguanine (preQ(0)). The protein is 7-cyano-7-deazaguanine synthase of Chloroherpeton thalassium (strain ATCC 35110 / GB-78).